A 281-amino-acid polypeptide reads, in one-letter code: ATP synthase gamma chain (281 aa).

It belongs to the ATPase gamma chain family. As to quaternary structure, F-type ATPases have 2 components, CF(1) - the catalytic core - and CF(0) - the membrane proton channel. CF(1) has five subunits: alpha(3), beta(3), gamma(1), delta(1), epsilon(1). CF(0) has three main subunits: a, b and c.

The protein resides in the cell membrane. Its function is as follows. Produces ATP from ADP in the presence of a proton gradient across the membrane. The gamma chain is believed to be important in regulating ATPase activity and the flow of protons through the CF(0) complex. The protein is ATP synthase gamma chain of Desulfitobacterium hafniense (strain DSM 10664 / DCB-2).